Here is a 930-residue protein sequence, read N- to C-terminus: Endoplasmic reticulum aminopeptidase 1 (930 aa).

Residues 1–2 lie on the Cytoplasmic side of the membrane; it reads MP. A helical; Signal-anchor for type II membrane protein transmembrane segment spans residues 3 to 23; sequence SLLPLVLTFLSVSSPSWCQNS. Residues 24–930 lie on the Lumenal side of the membrane; it reads DIESLKASNG…WLQKEKPELL (907 aa). Residues asparagine 59 and asparagine 143 are each glycosylated (N-linked (GlcNAc...) asparagine). Substrate is bound by residues glutamate 172 and 306 to 310; that span reads GAMEN. Position 342 (histidine 342) interacts with Zn(2+). The active site involves glutamate 343. Zn(2+)-binding residues include histidine 346 and glutamate 365. Cysteine 393 and cysteine 432 are disulfide-bonded. Asparagine 403 and asparagine 655 each carry an N-linked (GlcNAc...) asparagine glycan. A disulfide bridge links cysteine 725 with cysteine 732. Residues asparagine 749 and asparagine 890 are each glycosylated (N-linked (GlcNAc...) asparagine).

The protein belongs to the peptidase M1 family. As to quaternary structure, monomer. May also exist as a heterodimer; with ERAP2. Interacts with RBMX. It depends on Zn(2+) as a cofactor. N-glycosylated.

It is found in the endoplasmic reticulum membrane. Functionally, aminopeptidase that plays a central role in peptide trimming, a step required for the generation of most HLA class I-binding peptides. Peptide trimming is essential to customize longer precursor peptides to fit them to the correct length required for presentation on MHC class I molecules. Strongly prefers substrates 9-16 residues long. Rapidly degrades 13-mer to a 9-mer and then stops. Preferentially hydrolyzes the residue Leu and peptides with a hydrophobic C-terminus, while it has weak activity toward peptides with charged C-terminus. May play a role in the inactivation of peptide hormones. May be involved in the regulation of blood pressure through the inactivation of angiotensin II and/or the generation of bradykinin in the kidney. This is Endoplasmic reticulum aminopeptidase 1 (Erap1) from Mus musculus (Mouse).